The following is a 466-amino-acid chain: Asparagine--tRNA ligase (466 aa).

The protein belongs to the class-II aminoacyl-tRNA synthetase family. As to quaternary structure, homodimer.

Its subcellular location is the cytoplasm. The enzyme catalyses tRNA(Asn) + L-asparagine + ATP = L-asparaginyl-tRNA(Asn) + AMP + diphosphate + H(+). In Klebsiella pneumoniae subsp. pneumoniae (strain ATCC 700721 / MGH 78578), this protein is Asparagine--tRNA ligase.